The following is a 565-amino-acid chain: Formate--tetrahydrofolate ligase (565 aa).

Position 65–72 (65–72) interacts with ATP; that stretch reads TPAGEGKT.

It belongs to the formate--tetrahydrofolate ligase family.

It catalyses the reaction (6S)-5,6,7,8-tetrahydrofolate + formate + ATP = (6R)-10-formyltetrahydrofolate + ADP + phosphate. Its pathway is one-carbon metabolism; tetrahydrofolate interconversion. In Syntrophus aciditrophicus (strain SB), this protein is Formate--tetrahydrofolate ligase.